Consider the following 322-residue polypeptide: Replication factor C small subunit 2 (322 aa).

Residue 44–51 coordinates ATP; sequence GPPGTGKT.

Belongs to the activator 1 small subunits family. RfcS subfamily. Heteromultimer composed of small subunits (RfcS) and large subunits (RfcL).

Its function is as follows. Part of the RFC clamp loader complex which loads the PCNA sliding clamp onto DNA. In Pyrobaculum arsenaticum (strain DSM 13514 / JCM 11321 / PZ6), this protein is Replication factor C small subunit 2.